A 451-amino-acid polypeptide reads, in one-letter code: Neuraminidase (451 aa).

Over 1-6 (MNPNQK) the chain is Intravirion. A helical transmembrane segment spans residues 7 to 29 (IITIGSMSLTIATVCFLMQIAIL). Positions 11–33 (GSMSLTIATVCFLMQIAILATNV) are involved in apical transport and lipid raft association. Residues 30 to 451 (ATNVTLHFRQ…DGANINFMPL (422 aa)) are Virion surface-facing. Residues Asn32, Asn48, and Asn66 are each glycosylated (N-linked (GlcNAc...) asparagine; by host). A hypervariable stalk region region spans residues 36-68 (HFRQNEESIPAYNQTTPCKPIIIERNIKYRNWS). Positions 71 to 451 (QCQITGFAPF…DGANINFMPL (381 aa)) are head of neuraminidase. Intrachain disulfides connect Cys72/Cys399, Cys104/Cys109, Cys163/Cys210, Cys212/Cys217, Cys258/Cys272, Cys260/Cys270, Cys300/Cys319, and Cys403/Cys429. Arg98 is a substrate binding site. 2 N-linked (GlcNAc...) asparagine; by host glycosylation sites follow: Asn123 and Asn126. Residue Asp131 is the Proton donor/acceptor of the active site. Arg132 provides a ligand contact to substrate. Residues Asn180 and Asn214 are each glycosylated (N-linked (GlcNAc...) asparagine; by host). 256–257 (EE) is a binding site for substrate. Arg273 lines the substrate pocket. Residues Asp274, Gly278, and Asp306 each coordinate Ca(2+). The tract at residues 307–331 (TPRNDDSSSSSNCRDPNNERGNPGV) is disordered. Arg353 provides a ligand contact to substrate. An N-linked (GlcNAc...) asparagine; by host glycan is attached at Asn384. The Nucleophile role is filled by Tyr388.

Belongs to the glycosyl hydrolase 34 family. In terms of assembly, homotetramer. Requires Ca(2+) as cofactor. Post-translationally, N-glycosylated.

Its subcellular location is the virion membrane. It is found in the host apical cell membrane. The catalysed reaction is Hydrolysis of alpha-(2-&gt;3)-, alpha-(2-&gt;6)-, alpha-(2-&gt;8)- glycosidic linkages of terminal sialic acid residues in oligosaccharides, glycoproteins, glycolipids, colominic acid and synthetic substrates.. Inhibited by the neuraminidase inhibitors zanamivir (Relenza) and oseltamivir (Tamiflu). These drugs interfere with the release of progeny virus from infected cells and are effective against all influenza strains. Resistance to neuraminidase inhibitors is quite rare. In terms of biological role, catalyzes the removal of terminal sialic acid residues from viral and cellular glycoconjugates. Cleaves off the terminal sialic acids on the glycosylated HA during virus budding to facilitate virus release. Additionally helps virus spread through the circulation by further removing sialic acids from the cell surface. These cleavages prevent self-aggregation and ensure the efficient spread of the progeny virus from cell to cell. Otherwise, infection would be limited to one round of replication. Described as a receptor-destroying enzyme because it cleaves a terminal sialic acid from the cellular receptors. May facilitate viral invasion of the upper airways by cleaving the sialic acid moieties on the mucin of the airway epithelial cells. Likely to plays a role in the budding process through its association with lipid rafts during intracellular transport. May additionally display a raft-association independent effect on budding. Plays a role in the determination of host range restriction on replication and virulence. Sialidase activity in late endosome/lysosome traffic seems to enhance virus replication. This is Neuraminidase from Aves.